The primary structure comprises 242 residues: Phosphoribosylaminoimidazole-succinocarboxamide synthase (242 aa).

This sequence belongs to the SAICAR synthetase family.

It catalyses the reaction 5-amino-1-(5-phospho-D-ribosyl)imidazole-4-carboxylate + L-aspartate + ATP = (2S)-2-[5-amino-1-(5-phospho-beta-D-ribosyl)imidazole-4-carboxamido]succinate + ADP + phosphate + 2 H(+). It functions in the pathway purine metabolism; IMP biosynthesis via de novo pathway; 5-amino-1-(5-phospho-D-ribosyl)imidazole-4-carboxamide from 5-amino-1-(5-phospho-D-ribosyl)imidazole-4-carboxylate: step 1/2. The chain is Phosphoribosylaminoimidazole-succinocarboxamide synthase from Prochlorococcus marinus (strain MIT 9303).